Consider the following 95-residue polypeptide: DNA-directed RNA polymerase subunit Rpo6 (95 aa).

This sequence belongs to the archaeal Rpo6/eukaryotic RPB6 RNA polymerase subunit family. Part of the 13-subunit RNA polymerase complex.

The protein resides in the cytoplasm. The catalysed reaction is RNA(n) + a ribonucleoside 5'-triphosphate = RNA(n+1) + diphosphate. DNA-dependent RNA polymerase (RNAP) catalyzes the transcription of DNA into RNA using the four ribonucleoside triphosphates as substrates. The polypeptide is DNA-directed RNA polymerase subunit Rpo6 (Saccharolobus solfataricus (strain ATCC 35092 / DSM 1617 / JCM 11322 / P2) (Sulfolobus solfataricus)).